Here is a 128-residue protein sequence, read N- to C-terminus: Aspartate 1-decarboxylase (128 aa).

The active-site Schiff-base intermediate with substrate; via pyruvic acid is the S25. S25 is modified (pyruvic acid (Ser)). Residue T57 participates in substrate binding. The active-site Proton donor is the Y58. G73–A75 contacts substrate.

This sequence belongs to the PanD family. In terms of assembly, heterooctamer of four alpha and four beta subunits. Pyruvate serves as cofactor. Post-translationally, is synthesized initially as an inactive proenzyme, which is activated by self-cleavage at a specific serine bond to produce a beta-subunit with a hydroxyl group at its C-terminus and an alpha-subunit with a pyruvoyl group at its N-terminus.

The protein resides in the cytoplasm. It catalyses the reaction L-aspartate + H(+) = beta-alanine + CO2. Its pathway is cofactor biosynthesis; (R)-pantothenate biosynthesis; beta-alanine from L-aspartate: step 1/1. In terms of biological role, catalyzes the pyruvoyl-dependent decarboxylation of aspartate to produce beta-alanine. The polypeptide is Aspartate 1-decarboxylase (Paraburkholderia phytofirmans (strain DSM 17436 / LMG 22146 / PsJN) (Burkholderia phytofirmans)).